The following is a 354-amino-acid chain: Squamosa promoter-binding-like protein 15 (354 aa).

The interval 1 to 25 is disordered; the sequence is MELLMCSGQAESGGSSSTESSSLSG. The segment covering 7–25 has biased composition (low complexity); sequence SGQAESGGSSSTESSSLSG. Residues 56–133 form an SBP-type zinc finger; sequence TARCQVEGCR…ACHNERRRKP (78 aa). Residues Cys-59, Cys-64, Cys-81, His-84, Cys-100, Cys-103, His-107, and Cys-119 each contribute to the Zn(2+) site. The Bipartite nuclear localization signal motif lies at 116 to 132; sequence KRSCRRRLACHNERRRK.

It depends on Zn(2+) as a cofactor.

The protein resides in the nucleus. Trans-acting factor that binds specifically to the consensus nucleotide sequence 5'-TNCGTACAA-3'. The polypeptide is Squamosa promoter-binding-like protein 15 (SPL15) (Arabidopsis thaliana (Mouse-ear cress)).